Consider the following 47-residue polypeptide: Large ribosomal subunit protein bL34 (47 aa).

The protein belongs to the bacterial ribosomal protein bL34 family.

In Mycobacterium avium (strain 104), this protein is Large ribosomal subunit protein bL34.